Reading from the N-terminus, the 275-residue chain is 4-diphosphocytidyl-2-C-methyl-D-erythritol kinase (275 aa).

Lys14 is an active-site residue. 98–108 (PMGAGLGGGSS) lines the ATP pocket. Asp140 is an active-site residue.

The protein belongs to the GHMP kinase family. IspE subfamily.

It catalyses the reaction 4-CDP-2-C-methyl-D-erythritol + ATP = 4-CDP-2-C-methyl-D-erythritol 2-phosphate + ADP + H(+). It functions in the pathway isoprenoid biosynthesis; isopentenyl diphosphate biosynthesis via DXP pathway; isopentenyl diphosphate from 1-deoxy-D-xylulose 5-phosphate: step 3/6. Its function is as follows. Catalyzes the phosphorylation of the position 2 hydroxy group of 4-diphosphocytidyl-2C-methyl-D-erythritol. This is 4-diphosphocytidyl-2-C-methyl-D-erythritol kinase from Francisella tularensis subsp. tularensis (strain WY96-3418).